Here is a 542-residue protein sequence, read N- to C-terminus: Homeobox and leucine zipper protein Homez (542 aa).

A DNA-binding region (homeobox 1) is located at residues 55-114 (WTQAIQTSELDGNEHLLQAFSYFPYPSLADIALLCLRHGLQMEKVKTWFMAQRLRCGISW). The segment at 165 to 193 (LSPLAPSEQPTHMKGLKVEPEEPSQVSQL) is disordered. Glycyl lysine isopeptide (Lys-Gly) (interchain with G-Cter in SUMO2) cross-links involve residues lysine 181 and lysine 201. The disordered stretch occupies residues 250–307 (VHQPDKPASVSLLDNSCKEESEPSGIPPSSSTSSPSFQALANGTTATPKPLQPLGCIS). The span at 272–285 (PSGIPPSSSTSSPS) shows a compositional bias: low complexity. Positions 286–296 (FQALANGTTAT) are enriched in polar residues. Position 345 is a phosphoserine (serine 345). DNA-binding regions (homeobox) lie at residues 349-409 (QHQR…KHGQ) and 443-502 (TPPL…AEVV). A Nuclear localization signal motif is present at residues 352 to 357 (RKTKRK). 2 disordered regions span residues 424–454 (FQDPAIPTPSTRSLKEWAKTPPLPAPPPPPD) and 501–542 (VVVC…IIWD). Position 443 is a phosphothreonine (threonine 443). Over residues 444-454 (PPLPAPPPPPD) the composition is skewed to pro residues. Residues 505–542 (LDEEDEEDEEDELPEDGEEEEEEEEDDDDGDDDVIIWD) are compositionally biased toward acidic residues.

Homodimer or heterodimer (Potential). Interacts with HOXC8. As to expression, ubiquitous. Strongly expressed in testis.

The protein resides in the nucleus. Functionally, may function as a transcriptional regulator. The chain is Homeobox and leucine zipper protein Homez (Homez) from Mus musculus (Mouse).